A 177-amino-acid polypeptide reads, in one-letter code: MSRIGKKPISVPSGVTATVEGQLVKAKGPKGELSYIVNDEVLVKFEGNVISVSPRDQSKDARSKWGMSRSMIENIFCGVKNGFEKKLEINGVGYRAALQGKDVQLSLGFSHDVIYKVPPGITVTVPKPTEIVISGIDKQQVGQVAAEIREYRRPEPYKGKGVKHADECIFRKEGKKK.

Belongs to the universal ribosomal protein uL6 family. In terms of assembly, part of the 50S ribosomal subunit.

Functionally, this protein binds to the 23S rRNA, and is important in its secondary structure. It is located near the subunit interface in the base of the L7/L12 stalk, and near the tRNA binding site of the peptidyltransferase center. This chain is Large ribosomal subunit protein uL6, found in Bartonella quintana (strain Toulouse) (Rochalimaea quintana).